Here is a 651-residue protein sequence, read N- to C-terminus: Acetyl-coenzyme A synthetase (651 aa).

Residues 189–192, threonine 311, and asparagine 335 contribute to the CoA site; that span reads RGGK. Residues 387-389, 411-416, aspartate 500, and arginine 515 contribute to the ATP site; these read GEP and DTWWQT. Serine 523 lines the CoA pocket. Arginine 526 contributes to the ATP binding site. Positions 537, 539, and 542 each coordinate Mg(2+). Residue arginine 584 participates in CoA binding. Position 609 is an N6-acetyllysine (lysine 609).

Belongs to the ATP-dependent AMP-binding enzyme family. Mg(2+) serves as cofactor. Post-translationally, acetylated. Deacetylation by the SIR2-homolog deacetylase activates the enzyme.

It carries out the reaction acetate + ATP + CoA = acetyl-CoA + AMP + diphosphate. Its function is as follows. Catalyzes the conversion of acetate into acetyl-CoA (AcCoA), an essential intermediate at the junction of anabolic and catabolic pathways. AcsA undergoes a two-step reaction. In the first half reaction, AcsA combines acetate with ATP to form acetyl-adenylate (AcAMP) intermediate. In the second half reaction, it can then transfer the acetyl group from AcAMP to the sulfhydryl group of CoA, forming the product AcCoA. The protein is Acetyl-coenzyme A synthetase of Rhizobium leguminosarum bv. trifolii (strain WSM2304).